The primary structure comprises 109 residues: MKFISTSLLLMLLVSSLSPVQGVLEVYYTSLRCRCVQESSVFIPRRFIDRIQILPRGNGCPRKEIIVWKKNKSIVCVDPQAEWIQRMMEVLRKRSSSTLPVPVFKRKIP.

The signal sequence occupies residues 1-22 (MKFISTSLLLMLLVSSLSPVQG). 2 disulfide bridges follow: C33–C60 and C35–C76.

Belongs to the intercrine alpha (chemokine CxC) family. Highest levels in liver, followed by spleen, lymph node, appendix and stomach. Low levels in salivary gland, mammary gland and fetal spleen.

Its subcellular location is the secreted. Its function is as follows. Chemotactic for B-lymphocytes but not for T-lymphocytes, monocytes and neutrophils. Does not induce calcium release in B-lymphocytes. Binds to BLR1/CXCR5. The polypeptide is C-X-C motif chemokine 13 (CXCL13) (Homo sapiens (Human)).